The chain runs to 398 residues: Succinate--CoA ligase [ADP-forming] subunit beta (398 aa).

Residues 9–254 (KRLLHEYGAP…LSEEDPKEIE (246 aa)) form the ATP-grasp domain. Residues Lys-46, 53 to 55 (GRG), Glu-109, Ala-112, and Glu-117 contribute to the ATP site. The Mg(2+) site is built by Asn-209 and Asp-223. Substrate contacts are provided by residues Asn-274 and 331 to 333 (GIM).

Belongs to the succinate/malate CoA ligase beta subunit family. Heterotetramer of two alpha and two beta subunits. The cofactor is Mg(2+).

It carries out the reaction succinate + ATP + CoA = succinyl-CoA + ADP + phosphate. It catalyses the reaction GTP + succinate + CoA = succinyl-CoA + GDP + phosphate. The protein operates within carbohydrate metabolism; tricarboxylic acid cycle; succinate from succinyl-CoA (ligase route): step 1/1. Functionally, succinyl-CoA synthetase functions in the citric acid cycle (TCA), coupling the hydrolysis of succinyl-CoA to the synthesis of either ATP or GTP and thus represents the only step of substrate-level phosphorylation in the TCA. The beta subunit provides nucleotide specificity of the enzyme and binds the substrate succinate, while the binding sites for coenzyme A and phosphate are found in the alpha subunit. This is Succinate--CoA ligase [ADP-forming] subunit beta from Bartonella quintana (strain Toulouse) (Rochalimaea quintana).